Here is a 557-residue protein sequence, read N- to C-terminus: Nicotinate phosphoribosyltransferase 2 (557 aa).

Nicotinate contacts are provided by Tyr31 and Thr219. At His222 the chain carries Phosphohistidine. Position 329 (Arg329) interacts with nicotinate. Thr391 lines the 5-phospho-alpha-D-ribose 1-diphosphate pocket.

This sequence belongs to the NAPRTase family. Mg(2+) serves as cofactor. Requires Mn(2+) as cofactor. In terms of processing, transiently phosphorylated on a His residue during the reaction cycle. Phosphorylation strongly increases the affinity for substrates and increases the rate of nicotinate D-ribonucleotide production. Dephosphorylation regenerates the low-affinity form of the enzyme, leading to product release.

It carries out the reaction nicotinate + 5-phospho-alpha-D-ribose 1-diphosphate + ATP + H2O = nicotinate beta-D-ribonucleotide + ADP + phosphate + diphosphate. It functions in the pathway cofactor biosynthesis; NAD(+) biosynthesis; nicotinate D-ribonucleotide from nicotinate: step 1/1. Catalyzes the first step in the biosynthesis of NAD from nicotinic acid, the ATP-dependent synthesis of beta-nicotinate D-ribonucleotide from nicotinate and 5-phospho-D-ribose 1-phosphate. Helps prevent cellular oxidative stress via its role in NAD biosynthesis. The sequence is that of Nicotinate phosphoribosyltransferase 2 from Arabidopsis thaliana (Mouse-ear cress).